Reading from the N-terminus, the 468-residue chain is 6-phosphogluconate dehydrogenase, decarboxylating (468 aa).

Residues G10–G15, N33–S35, I74–S76, and N102 each bind NADP(+). Substrate contacts are provided by residues N102 and S128–G130. Catalysis depends on K182, which acts as the Proton acceptor. H185–N186 serves as a coordination point for substrate. The Proton donor role is filled by E189. Residues Y190, K259, R286, R445, and H451 each coordinate substrate.

It belongs to the 6-phosphogluconate dehydrogenase family. In terms of assembly, homodimer.

The enzyme catalyses 6-phospho-D-gluconate + NADP(+) = D-ribulose 5-phosphate + CO2 + NADPH. It functions in the pathway carbohydrate degradation; pentose phosphate pathway; D-ribulose 5-phosphate from D-glucose 6-phosphate (oxidative stage): step 3/3. Functionally, catalyzes the oxidative decarboxylation of 6-phosphogluconate to ribulose 5-phosphate and CO(2), with concomitant reduction of NADP to NADPH. The chain is 6-phosphogluconate dehydrogenase, decarboxylating (gnd) from Buchnera aphidicola subsp. Baizongia pistaciae (strain Bp).